The sequence spans 212 residues: ATP-dependent dethiobiotin synthetase BioD (212 aa).

Residue Asp12–Phe17 coordinates ATP. Thr16 serves as a coordination point for Mg(2+). Residue Lys33 is part of the active site. Ser37 is a substrate binding site. ATP-binding positions include Asp50, Glu110 to Gly113, and Asn170 to Cys171. Positions 50 and 110 each coordinate Mg(2+).

Belongs to the dethiobiotin synthetase family. As to quaternary structure, homodimer. It depends on Mg(2+) as a cofactor.

Its subcellular location is the cytoplasm. The enzyme catalyses (7R,8S)-7,8-diammoniononanoate + CO2 + ATP = (4R,5S)-dethiobiotin + ADP + phosphate + 3 H(+). It participates in cofactor biosynthesis; biotin biosynthesis; biotin from 7,8-diaminononanoate: step 1/2. Functionally, catalyzes a mechanistically unusual reaction, the ATP-dependent insertion of CO2 between the N7 and N8 nitrogen atoms of 7,8-diaminopelargonic acid (DAPA, also called 7,8-diammoniononanoate) to form a ureido ring. The protein is ATP-dependent dethiobiotin synthetase BioD of Legionella pneumophila (strain Lens).